A 222-amino-acid chain; its full sequence is NADH dehydrogenase [ubiquinone] iron-sulfur protein 8-A, mitochondrial (222 aa).

2 consecutive 4Fe-4S ferredoxin-type domains span residues 114–143 and 153–182; these read RRYP…IEAE and TRYD…EGPN. Positions 123, 126, 129, 133, 162, 165, 168, and 172 each coordinate [4Fe-4S] cluster.

The protein belongs to the complex I 23 kDa subunit family. In terms of assembly, complex I is composed of at least 49 different subunits. This is a component of the iron-sulfur (IP) fragment of the enzyme. [4Fe-4S] cluster is required as a cofactor.

It localises to the mitochondrion. The enzyme catalyses a ubiquinone + NADH + 5 H(+)(in) = a ubiquinol + NAD(+) + 4 H(+)(out). Its function is as follows. Core subunit of the mitochondrial membrane respiratory chain NADH dehydrogenase (Complex I) that is believed to belong to the minimal assembly required for catalysis. Complex I functions in the transfer of electrons from NADH to the respiratory chain. The immediate electron acceptor for the enzyme is believed to be ubiquinone. May donate electrons to ubiquinone. The sequence is that of NADH dehydrogenase [ubiquinone] iron-sulfur protein 8-A, mitochondrial from Arabidopsis thaliana (Mouse-ear cress).